Consider the following 248-residue polypeptide: MWLCPLALTLILMAASGAACEVKDVCVGSPGIPGTPGSHGLPGRDGRDGVKGDPGPPGPMGPPGETPCPPGNNGLPGAPGVPGERGEKGEAGERGPPGLPAHLDEELQATLHDFRHQILQTRGALSLQGSIMTVGEKVFSSNGQSITFDAIQEACARAGGRIAVPRNPEENEAIASFVKKYNTYAYVGLTEGPSPGDFRYSDGTPVNYTNWYRGEPAGRGKEQCVEMYTDGQWNDRNCLYSRLTICEF.

Residues 1-20 (MWLCPLALTLILMAASGAAC) form the signal peptide. The Collagen-like domain maps to 28–100 (GSPGIPGTPG…AGERGPPGLP (73 aa)). 4-hydroxyproline is present on residues proline 30, proline 33, proline 36, proline 42, proline 54, proline 57, proline 63, proline 67, and proline 70. The tract at residues 33–101 (PGTPGSHGLP…GERGPPGLPA (69 aa)) is disordered. Residues 42-51 (PGRDGRDGVK) are compositionally biased toward basic and acidic residues. Over residues 54–70 (PGPPGPMGPPGETPCPP) the composition is skewed to pro residues. A compositionally biased stretch (low complexity) spans 71-82 (GNNGLPGAPGVP). The segment covering 84 to 93 (ERGEKGEAGE) has biased composition (basic and acidic residues). The region spanning 132–248 (MTVGEKVFSS…LYSRLTICEF (117 aa)) is the C-type lectin domain. Cystine bridges form between cysteine 155–cysteine 246 and cysteine 224–cysteine 238. An N-linked (GlcNAc...) asparagine glycan is attached at asparagine 207.

It belongs to the SFTPA family. As to quaternary structure, oligomeric complex of 6 set of homotrimers. In terms of processing, N-acetylated.

The protein resides in the secreted. Its subcellular location is the extracellular space. It localises to the extracellular matrix. The protein localises to the surface film. Functionally, in presence of calcium ions, it binds to surfactant phospholipids and contributes to lower the surface tension at the air-liquid interface in the alveoli of the mammalian lung and is essential for normal respiration. The sequence is that of Pulmonary surfactant-associated protein A2 (SFTPA2) from Homo sapiens (Human).